We begin with the raw amino-acid sequence, 61 residues long: Metallothionein-1D (61 aa).

The segment at 1–29 (MDPNCSCSTGGSCSCATSCTCKACRCTSC) is beta. Positions 5, 7, 13, 15, 19, 21, 24, 26, 29, 33, 34, 36, 37, 41, 44, 48, 50, 57, 59, and 60 each coordinate a divalent metal cation. Residues 30 to 61 (KKSCCSCCPAGCAKCAQGCICKGASDKCSCCA) form an alpha region.

Belongs to the metallothionein superfamily. Type 1 family. As to quaternary structure, monomer.

Its function is as follows. Metallothioneins have a high content of cysteine residues that bind various heavy metals; these proteins are transcriptionally regulated by both heavy metals and glucocorticoids. In Sus scrofa (Pig), this protein is Metallothionein-1D (MT1D).